The sequence spans 334 residues: CRISPR-associated protein Cas1 3 (334 aa).

Mn(2+) contacts are provided by Glu165, His230, and Glu245.

This sequence belongs to the CRISPR-associated endonuclease Cas1 family. In terms of assembly, homodimer, forms a heterotetramer with a Cas2 homodimer. Requires Mg(2+) as cofactor. It depends on Mn(2+) as a cofactor.

In terms of biological role, CRISPR (clustered regularly interspaced short palindromic repeat), is an adaptive immune system that provides protection against mobile genetic elements (viruses, transposable elements and conjugative plasmids). CRISPR clusters contain spacers, sequences complementary to antecedent mobile elements, and target invading nucleic acids. CRISPR clusters are transcribed and processed into CRISPR RNA (crRNA). Acts as a dsDNA endonuclease. Involved in the integration of spacer DNA into the CRISPR cassette. The protein is CRISPR-associated protein Cas1 3 of Methanobrevibacter ruminantium (strain ATCC 35063 / DSM 1093 / JCM 13430 / OCM 146 / M1) (Methanobacterium ruminantium).